Here is a 412-residue protein sequence, read N- to C-terminus: Aspartate kinase Ask_LysC (412 aa).

In terms of domain architecture, ACT spans leucine 265–arginine 332.

It belongs to the aspartokinase family.

It localises to the cytoplasm. It catalyses the reaction L-aspartate + ATP = 4-phospho-L-aspartate + ADP. Its pathway is amino-acid biosynthesis; L-lysine biosynthesis via DAP pathway; (S)-tetrahydrodipicolinate from L-aspartate: step 1/4. It functions in the pathway amino-acid biosynthesis; L-methionine biosynthesis via de novo pathway; L-homoserine from L-aspartate: step 1/3. The protein operates within amino-acid biosynthesis; L-threonine biosynthesis; L-threonine from L-aspartate: step 1/5. Its activity is regulated as follows. Allosterically and strongly feedback inhibited by tryptophan. Addition of lysine alone slightly enhances activity. The simultaneous addition of lysine and tryptophan leads to very strong feedback inhibition of the enzyme. The feedback control by tryptophan is reduced in the presence of the compatible solutes hydroxyectoine or ectoine. In terms of biological role, involved in the biosynthesis of L-aspartate-beta-semialdehyde which is a central intermediate in the biosynthesis of different amino acids (L-lysine, L-methionine, L-threonine). Catalyzes the phosphorylation of the beta-carboxyl group of L-aspartate to yield 4-phospho-L-aspartate. The polypeptide is Aspartate kinase Ask_LysC (lysC) (Stutzerimonas stutzeri (strain A1501) (Pseudomonas stutzeri)).